A 185-amino-acid polypeptide reads, in one-letter code: Ribosome-recycling factor (185 aa).

Belongs to the RRF family.

Its subcellular location is the cytoplasm. Its function is as follows. Responsible for the release of ribosomes from messenger RNA at the termination of protein biosynthesis. May increase the efficiency of translation by recycling ribosomes from one round of translation to another. This is Ribosome-recycling factor from Xylella fastidiosa (strain Temecula1 / ATCC 700964).